Reading from the N-terminus, the 398-residue chain is Phosphoglycerate kinase (398 aa).

Substrate-binding positions include 21-23, Arg36, 59-62, Arg119, and Arg157; these read DFN and HLGR. ATP contacts are provided by residues Lys208, Gly296, Glu327, and 354-357; that span reads GGDS.

This sequence belongs to the phosphoglycerate kinase family. Monomer.

The protein resides in the cytoplasm. It catalyses the reaction (2R)-3-phosphoglycerate + ATP = (2R)-3-phospho-glyceroyl phosphate + ADP. It participates in carbohydrate degradation; glycolysis; pyruvate from D-glyceraldehyde 3-phosphate: step 2/5. The sequence is that of Phosphoglycerate kinase from Streptococcus pyogenes serotype M5 (strain Manfredo).